The following is a 1183-amino-acid chain: DNA-directed RNA polymerase subunit beta (1183 aa).

Positions 1155–1183 (ADVDEDDVNEHKVNIQQSSIPESQKETTD) are disordered.

The protein belongs to the RNA polymerase beta chain family. As to quaternary structure, the RNAP catalytic core consists of 2 alpha, 1 beta, 1 beta' and 1 omega subunit. When a sigma factor is associated with the core the holoenzyme is formed, which can initiate transcription.

The enzyme catalyses RNA(n) + a ribonucleoside 5'-triphosphate = RNA(n+1) + diphosphate. Functionally, DNA-dependent RNA polymerase catalyzes the transcription of DNA into RNA using the four ribonucleoside triphosphates as substrates. This is DNA-directed RNA polymerase subunit beta from Staphylococcus carnosus (strain TM300).